The following is a 282-amino-acid chain: Acetyl-coenzyme A carboxylase carboxyl transferase subunit beta (282 aa).

The region spanning 29–282 (LMKRCPNCGL…LLKYGGMQDD (254 aa)) is the CoA carboxyltransferase N-terminal domain. The Zn(2+) site is built by Cys33, Cys36, Cys51, and Cys54. The C4-type zinc-finger motif lies at 33–54 (CPNCGLEFFARRLDKYKTCPDC).

It belongs to the AccD/PCCB family. In terms of assembly, acetyl-CoA carboxylase is a heterohexamer composed of biotin carboxyl carrier protein (AccB), biotin carboxylase (AccC) and two subunits each of ACCase subunit alpha (AccA) and ACCase subunit beta (AccD). Requires Zn(2+) as cofactor.

The protein localises to the cytoplasm. It carries out the reaction N(6)-carboxybiotinyl-L-lysyl-[protein] + acetyl-CoA = N(6)-biotinyl-L-lysyl-[protein] + malonyl-CoA. It participates in lipid metabolism; malonyl-CoA biosynthesis; malonyl-CoA from acetyl-CoA: step 1/1. Component of the acetyl coenzyme A carboxylase (ACC) complex. Biotin carboxylase (BC) catalyzes the carboxylation of biotin on its carrier protein (BCCP) and then the CO(2) group is transferred by the transcarboxylase to acetyl-CoA to form malonyl-CoA. The sequence is that of Acetyl-coenzyme A carboxylase carboxyl transferase subunit beta from Lactobacillus delbrueckii subsp. bulgaricus (strain ATCC 11842 / DSM 20081 / BCRC 10696 / JCM 1002 / NBRC 13953 / NCIMB 11778 / NCTC 12712 / WDCM 00102 / Lb 14).